The primary structure comprises 320 residues: 3-O-acetylpapaveroxine carboxylesterase CXE1 (320 aa).

The short motif at 72 to 74 is the Involved in the stabilization of the negatively charged intermediate by the formation of the oxyanion hole element; it reads HGG. Active-site residues include serine 158, aspartate 262, and histidine 292.

This sequence belongs to the 'GDXG' lipolytic enzyme family.

The catalysed reaction is 3-O-acetylpapaveroxine + H2O = narcotine hemiacetal + acetate + H(+). Its pathway is alkaloid biosynthesis. In terms of biological role, carboxylesterase involved in the biosynthesis of the benzylisoquinoline alkaloid noscapine. Converts 3-O-acetylpapaveroxine to papaveroxine which spontaneously rearranges to narcotine hemiacetal. This chain is 3-O-acetylpapaveroxine carboxylesterase CXE1, found in Papaver somniferum (Opium poppy).